The chain runs to 222 residues: 7-cyano-7-deazaguanine synthase (222 aa).

F11–L21 serves as a coordination point for ATP. Residues C187, C195, C198, and C201 each contribute to the Zn(2+) site.

This sequence belongs to the QueC family. Requires Zn(2+) as cofactor.

It catalyses the reaction 7-carboxy-7-deazaguanine + NH4(+) + ATP = 7-cyano-7-deazaguanine + ADP + phosphate + H2O + H(+). Its pathway is purine metabolism; 7-cyano-7-deazaguanine biosynthesis. Catalyzes the ATP-dependent conversion of 7-carboxy-7-deazaguanine (CDG) to 7-cyano-7-deazaguanine (preQ(0)). In Actinobacillus pleuropneumoniae serotype 5b (strain L20), this protein is 7-cyano-7-deazaguanine synthase.